Reading from the N-terminus, the 285-residue chain is Ribosomal RNA small subunit methyltransferase A (285 aa).

Residues Asn30, Leu32, Gly57, Glu78, Asp101, and Asn121 each coordinate S-adenosyl-L-methionine.

This sequence belongs to the class I-like SAM-binding methyltransferase superfamily. rRNA adenine N(6)-methyltransferase family. RsmA subfamily.

Its subcellular location is the cytoplasm. The catalysed reaction is adenosine(1518)/adenosine(1519) in 16S rRNA + 4 S-adenosyl-L-methionine = N(6)-dimethyladenosine(1518)/N(6)-dimethyladenosine(1519) in 16S rRNA + 4 S-adenosyl-L-homocysteine + 4 H(+). In terms of biological role, specifically dimethylates two adjacent adenosines (A1518 and A1519) in the loop of a conserved hairpin near the 3'-end of 16S rRNA in the 30S particle. May play a critical role in biogenesis of 30S subunits. This is Ribosomal RNA small subunit methyltransferase A from Treponema pallidum (strain Nichols).